The primary structure comprises 469 residues: Ribulose bisphosphate carboxylase large chain (469 aa).

Position 8 is an N6,N6,N6-trimethyllysine (Lys8). Residues Asn117 and Thr167 each coordinate substrate. Catalysis depends on Lys169, which acts as the Proton acceptor. Lys171 lines the substrate pocket. Residues Lys195, Asp197, and Glu198 each coordinate Mg(2+). The residue at position 195 (Lys195) is an N6-carboxylysine. Residue His288 is the Proton acceptor of the active site. Residues Arg289, His321, and Ser373 each coordinate substrate.

This sequence belongs to the RuBisCO large chain family. Type I subfamily. As to quaternary structure, heterohexadecamer of 8 large chains and 8 small chains; disulfide-linked. The disulfide link is formed within the large subunit homodimers. Mg(2+) is required as a cofactor. The disulfide bond which can form in the large chain dimeric partners within the hexadecamer appears to be associated with oxidative stress and protein turnover.

It is found in the plastid. The protein localises to the chloroplast. It catalyses the reaction 2 (2R)-3-phosphoglycerate + 2 H(+) = D-ribulose 1,5-bisphosphate + CO2 + H2O. It carries out the reaction D-ribulose 1,5-bisphosphate + O2 = 2-phosphoglycolate + (2R)-3-phosphoglycerate + 2 H(+). Its function is as follows. RuBisCO catalyzes two reactions: the carboxylation of D-ribulose 1,5-bisphosphate, the primary event in carbon dioxide fixation, as well as the oxidative fragmentation of the pentose substrate in the photorespiration process. Both reactions occur simultaneously and in competition at the same active site. The protein is Ribulose bisphosphate carboxylase large chain of Coleonema pulchellum (Confetti bush).